The primary structure comprises 479 residues: UDP-N-acetylmuramate--L-alanine ligase (479 aa).

128–134 (GAHGKTT) is an ATP binding site.

This sequence belongs to the MurCDEF family.

It localises to the cytoplasm. It catalyses the reaction UDP-N-acetyl-alpha-D-muramate + L-alanine + ATP = UDP-N-acetyl-alpha-D-muramoyl-L-alanine + ADP + phosphate + H(+). Its pathway is cell wall biogenesis; peptidoglycan biosynthesis. Functionally, cell wall formation. The polypeptide is UDP-N-acetylmuramate--L-alanine ligase (Psychrobacter cryohalolentis (strain ATCC BAA-1226 / DSM 17306 / VKM B-2378 / K5)).